Consider the following 155-residue polypeptide: Interleukin-2 (155 aa).

A signal peptide spans 1 to 20 (MYKIQLLSCIALTLALVANG). A glycan (O-linked (GalNAc...) threonine) is linked at T23. A disulfide bond links C79 and C127.

This sequence belongs to the IL-2 family.

It is found in the secreted. Its function is as follows. Cytokine produced by activated CD4-positive helper T-cells and to a lesser extend activated CD8-positive T-cells and natural killer (NK) cells that plays pivotal roles in the immune response and tolerance. Binds to a receptor complex composed of either the high-affinity trimeric IL-2R (IL2RA/CD25, IL2RB/CD122 and IL2RG/CD132) or the low-affinity dimeric IL-2R (IL2RB and IL2RG). Interaction with the receptor leads to oligomerization and conformation changes in the IL-2R subunits resulting in downstream signaling starting with phosphorylation of JAK1 and JAK3. In turn, JAK1 and JAK3 phosphorylate the receptor to form a docking site leading to the phosphorylation of several substrates including STAT5. This process leads to activation of several pathways including STAT, phosphoinositide-3-kinase/PI3K and mitogen-activated protein kinase/MAPK pathways. Functions as a T-cell growth factor and can increase NK-cell cytolytic activity as well. Promotes strong proliferation of activated B-cells and subsequently immunoglobulin production. Plays a pivotal role in regulating the adaptive immune system by controlling the survival and proliferation of regulatory T-cells, which are required for the maintenance of immune tolerance. Moreover, participates in the differentiation and homeostasis of effector T-cell subsets, including Th1, Th2, Th17 as well as memory CD8-positive T-cells. In Ovis aries (Sheep), this protein is Interleukin-2 (IL2).